A 239-amino-acid chain; its full sequence is tRNA (guanine-N(1)-)-methyltransferase (239 aa).

S-adenosyl-L-methionine-binding positions include Gly110 and 130–135 (IGDYVL).

This sequence belongs to the RNA methyltransferase TrmD family. As to quaternary structure, homodimer.

It localises to the cytoplasm. It carries out the reaction guanosine(37) in tRNA + S-adenosyl-L-methionine = N(1)-methylguanosine(37) in tRNA + S-adenosyl-L-homocysteine + H(+). In terms of biological role, specifically methylates guanosine-37 in various tRNAs. This is tRNA (guanine-N(1)-)-methyltransferase from Borrelia garinii subsp. bavariensis (strain ATCC BAA-2496 / DSM 23469 / PBi) (Borreliella bavariensis).